Consider the following 257-residue polypeptide: 5-oxoprolinase subunit A (257 aa).

The protein belongs to the LamB/PxpA family. In terms of assembly, forms a complex composed of PxpA, PxpB and PxpC.

It catalyses the reaction 5-oxo-L-proline + ATP + 2 H2O = L-glutamate + ADP + phosphate + H(+). Functionally, catalyzes the cleavage of 5-oxoproline to form L-glutamate coupled to the hydrolysis of ATP to ADP and inorganic phosphate. This Fusobacterium nucleatum subsp. nucleatum (strain ATCC 25586 / DSM 15643 / BCRC 10681 / CIP 101130 / JCM 8532 / KCTC 2640 / LMG 13131 / VPI 4355) protein is 5-oxoprolinase subunit A.